We begin with the raw amino-acid sequence, 273 residues long: Glutamate 5-kinase (273 aa).

ATP is bound at residue lysine 15. Substrate-binding residues include serine 55, aspartate 142, and asparagine 158. ATP-binding positions include 178-179 (SD) and 220-226 (TGGMLSK).

It belongs to the glutamate 5-kinase family.

The protein resides in the cytoplasm. The catalysed reaction is L-glutamate + ATP = L-glutamyl 5-phosphate + ADP. The protein operates within amino-acid biosynthesis; L-proline biosynthesis; L-glutamate 5-semialdehyde from L-glutamate: step 1/2. Functionally, catalyzes the transfer of a phosphate group to glutamate to form L-glutamate 5-phosphate. The protein is Glutamate 5-kinase of Streptococcus pyogenes serotype M6 (strain ATCC BAA-946 / MGAS10394).